Consider the following 490-residue polypeptide: Bifunctional protein GlmU (490 aa).

The tract at residues M1–R241 is pyrophosphorylase. UDP-N-acetyl-alpha-D-glucosamine-binding positions include L12–G15, K26, Q83, G88–T89, S112–D114, G151, E166, N181, and N239. D114 provides a ligand contact to Mg(2+). N239 contacts Mg(2+). The tract at residues V242–A262 is linker. An N-acetyltransferase region spans residues G263–E490. Positions 344 and 362 each coordinate UDP-N-acetyl-alpha-D-glucosamine. H374 (proton acceptor) is an active-site residue. UDP-N-acetyl-alpha-D-glucosamine is bound by residues Y377 and N388. Residues A391, N397–Y398, S416, and A434 each bind acetyl-CoA. A disordered region spans residues R462–E490. Residues G467–E490 show a composition bias toward low complexity.

This sequence in the N-terminal section; belongs to the N-acetylglucosamine-1-phosphate uridyltransferase family. In the C-terminal section; belongs to the transferase hexapeptide repeat family. In terms of assembly, homotrimer. The cofactor is Mg(2+).

The protein resides in the cytoplasm. It catalyses the reaction alpha-D-glucosamine 1-phosphate + acetyl-CoA = N-acetyl-alpha-D-glucosamine 1-phosphate + CoA + H(+). It carries out the reaction N-acetyl-alpha-D-glucosamine 1-phosphate + UTP + H(+) = UDP-N-acetyl-alpha-D-glucosamine + diphosphate. It functions in the pathway nucleotide-sugar biosynthesis; UDP-N-acetyl-alpha-D-glucosamine biosynthesis; N-acetyl-alpha-D-glucosamine 1-phosphate from alpha-D-glucosamine 6-phosphate (route II): step 2/2. The protein operates within nucleotide-sugar biosynthesis; UDP-N-acetyl-alpha-D-glucosamine biosynthesis; UDP-N-acetyl-alpha-D-glucosamine from N-acetyl-alpha-D-glucosamine 1-phosphate: step 1/1. It participates in bacterial outer membrane biogenesis; LPS lipid A biosynthesis. Its function is as follows. Catalyzes the last two sequential reactions in the de novo biosynthetic pathway for UDP-N-acetylglucosamine (UDP-GlcNAc). The C-terminal domain catalyzes the transfer of acetyl group from acetyl coenzyme A to glucosamine-1-phosphate (GlcN-1-P) to produce N-acetylglucosamine-1-phosphate (GlcNAc-1-P), which is converted into UDP-GlcNAc by the transfer of uridine 5-monophosphate (from uridine 5-triphosphate), a reaction catalyzed by the N-terminal domain. The protein is Bifunctional protein GlmU of Mycobacterium avium (strain 104).